The primary structure comprises 548 residues: Viridiflorene synthase (548 aa).

5 residues coordinate Mg(2+): aspartate 301, aspartate 305, aspartate 444, threonine 448, and glutamate 452. The DDXXD motif motif lies at 301 to 305 (DDTFD).

This sequence belongs to the terpene synthase family. Tpsa subfamily. Requires Mg(2+) as cofactor. Expressed in stem and leaf trichomes. Detected in roots, fruits and flowers.

The protein resides in the cytoplasm. The enzyme catalyses (2E,6E)-farnesyl diphosphate = viridiflorene + diphosphate. It functions in the pathway secondary metabolite biosynthesis; terpenoid biosynthesis. Sesquiterpene synthase involved in the production of viridiflorene from (E,E)-farnesyl diphosphate. Can also use (Z,Z)-FPP to make several unidentified sesquiterpenes. The sequence is that of Viridiflorene synthase from Solanum lycopersicum (Tomato).